A 316-amino-acid polypeptide reads, in one-letter code: Ribosomal RNA small subunit methyltransferase A (316 aa).

Asn-33, Val-35, Gly-60, Glu-81, Asp-110, and Asn-133 together coordinate S-adenosyl-L-methionine.

Belongs to the class I-like SAM-binding methyltransferase superfamily. rRNA adenine N(6)-methyltransferase family. RsmA subfamily.

It is found in the cytoplasm. The catalysed reaction is adenosine(1518)/adenosine(1519) in 16S rRNA + 4 S-adenosyl-L-methionine = N(6)-dimethyladenosine(1518)/N(6)-dimethyladenosine(1519) in 16S rRNA + 4 S-adenosyl-L-homocysteine + 4 H(+). Specifically dimethylates two adjacent adenosines (A1518 and A1519) in the loop of a conserved hairpin near the 3'-end of 16S rRNA in the 30S particle. May play a critical role in biogenesis of 30S subunits. This is Ribosomal RNA small subunit methyltransferase A from Corynebacterium jeikeium (strain K411).